A 416-amino-acid polypeptide reads, in one-letter code: ATP-dependent Clp protease ATP-binding subunit ClpX (416 aa).

Residues 1–54 (MFKFGDEKGQLKCSFCGKSQEQVRKLVAGPGVYICDECIELCNEIIEEELNDDV) form the ClpX-type ZB domain. Residues cysteine 13, cysteine 16, cysteine 35, and cysteine 38 each coordinate Zn(2+). 117–124 (PTGCGKTL) contributes to the ATP binding site.

It belongs to the ClpX chaperone family. As to quaternary structure, component of the ClpX-ClpP complex. Forms a hexameric ring that, in the presence of ATP, binds to fourteen ClpP subunits assembled into a disk-like structure with a central cavity, resembling the structure of eukaryotic proteasomes.

In terms of biological role, ATP-dependent specificity component of the Clp protease. It directs the protease to specific substrates. Can perform chaperone functions in the absence of ClpP. The protein is ATP-dependent Clp protease ATP-binding subunit ClpX of Halothermothrix orenii (strain H 168 / OCM 544 / DSM 9562).